We begin with the raw amino-acid sequence, 654 residues long: Tetratricopeptide repeat protein 30 homolog (654 aa).

TPR repeat units follow at residues 10 to 43, 44 to 76, 143 to 176, 178 to 210, 384 to 417, 449 to 483, and 533 to 566; these read EGHV…ANTR, AGLS…APKE, ADTL…GGFN, LVAY…GVRN, LAAK…YLPV, AVWR…HSDD, and CIVN…GAGG.

The protein belongs to the TTC30/dfy-1/fleer family.

It is found in the cell projection. Its subcellular location is the cilium. Required for polyglutamylation of axonemal tubulin in sensory cilia. Plays a role in anterograde intraflagellar transport (IFT), the process by which cilia precursors are transported from the base of the cilium to the site of their incorporation at the tip. The protein is Tetratricopeptide repeat protein 30 homolog of Drosophila pseudoobscura pseudoobscura (Fruit fly).